A 432-amino-acid chain; its full sequence is Alcohol acyltransferase 9 (432 aa).

Residues His-156 and Asp-379 each act as proton acceptor in the active site.

Belongs to the plant acyltransferase family. Expressed in fruit.

It carries out the reaction 2-(methylsulfanyl)acetyl-CoA + butan-1-ol = butyl 2-(methylsulfanyl)acetate + CoA. The catalysed reaction is ethanol + acetyl-CoA = ethyl acetate + CoA. The enzyme catalyses butan-1-ol + acetyl-CoA = butyl acetate + CoA. It catalyses the reaction butan-1-ol + propanoyl-CoA = butyl propanoate + CoA. Its function is as follows. Involved in the biosynthesis of volatile esters which confer kiwifruit flavor. Alcohol acyl transferase that can use a wide range of alcohols as substrate to produce esters. Exhibits acetyl-CoA:alcohol O-acyltransferase activity. This is Alcohol acyltransferase 9 from Actinidia eriantha (Velvet vine).